A 384-amino-acid chain; its full sequence is Probable inactive patatin-like protein 9 (384 aa).

A PNPLA domain is found at 33–234 (LSIDGGGTTG…VMNNPTAAAV (202 aa)). Residues 37 to 42 (GGGTTG) carry the GXGXXG motif. The Proton acceptor role is filled by Asp221. The DGA/G signature appears at 221-223 (DGG). The tract at residues 363–384 (GKSSLPPSPCKESAVNPLADGR) is disordered.

Belongs to the patatin family. Highly expressed in roots and at lower levels in flowers and siliques.

The chain is Probable inactive patatin-like protein 9 (PLP9) from Arabidopsis thaliana (Mouse-ear cress).